A 119-amino-acid polypeptide reads, in one-letter code: uncharacterized protein (119 aa).

Residues 78–119 (SHRKSQQHQTQGNQVLRGTRKLESPTVGPRPGLRRQHTRNFL) form a disordered region. Over residues 84–93 (QHQTQGNQVL) the composition is skewed to polar residues. Residues 109 to 119 (GLRRQHTRNFL) show a composition bias toward basic residues.

This is an uncharacterized protein from Saccharomyces cerevisiae (strain ATCC 204508 / S288c) (Baker's yeast).